Reading from the N-terminus, the 592-residue chain is MKTGKIIKVSGPLVVAEGMDEANIYDVCKVGEKGLIGEIIEMRGDKASIQVYEETSGIGPGDPVVTTGEPLSVELGPGLIESMFDGIQRPLDAFMEAAKSSFLTRGVSVPSLNREKKWDFKPTAKVGDEVKSGDVIGTVQETPVVEQRIMIPIGIEGKIKEINAGSFTVTETIAIVETEKGDREVQLMQKWPVRKGRPYSAKINPVEPMLTGQRVIDTFFPVAKGGAAAIPGPFGAGKTVTQHQIAKWGDAEIVVYVGCGERGNEMTDVVNEFPELIDPKTGESLMKRTVLIANTSNMPVAAREASIYTGITIAEYFRDMGYAVSIMADSTSRWAEALREMSGRLEEMPGDEGYPAYLGSRLADYYERAGKVECLGNDGRIGSITAIGAVSPPGGDISEPVSQSTLRIVKVFWGLDAQLAYQRHFPTINWLTSYSLYADTIDKWMNGNVAENWGALRLEAMTILQDEAQLQEIVRLVGIDALSEKDRLKLDVAKSIREDYLQQNGFHEIDTYTSLKKQYKMLSLILGYRKEAERALEAGVYLNDILAMEDLKDRIARSKYIHEDDLEKMDQIVVDLKNAIDNLINKGGVANA.

232–239 provides a ligand contact to ATP; sequence GPFGAGKT.

This sequence belongs to the ATPase alpha/beta chains family.

It carries out the reaction ATP + H2O + 4 H(+)(in) = ADP + phosphate + 5 H(+)(out). In terms of biological role, produces ATP from ADP in the presence of a proton gradient across the membrane. The V-type alpha chain is a catalytic subunit. The polypeptide is V-type ATP synthase alpha chain (Clostridium botulinum (strain Alaska E43 / Type E3)).